We begin with the raw amino-acid sequence, 212 residues long: Thymidylate kinase (212 aa).

Residue glycine 11–serine 18 participates in ATP binding.

This sequence belongs to the thymidylate kinase family.

It catalyses the reaction dTMP + ATP = dTDP + ADP. Its function is as follows. Phosphorylation of dTMP to form dTDP in both de novo and salvage pathways of dTTP synthesis. In Colwellia psychrerythraea (strain 34H / ATCC BAA-681) (Vibrio psychroerythus), this protein is Thymidylate kinase.